Reading from the N-terminus, the 313-residue chain is MTSCHVAEDPIKKVAIFGGTHGNELTGVFLVKHWLENSTEIQRTGLEVKPFITNPRAVKKCTRYIDCDLNRVFDPENLGKKKSEDLPYEVRRAQEINHLFGPKDSEDSYDIIFDLHNTTSNMGCTLILEDSRNDFLIQMFHYIKTSLAPLPCYVYLIEHPSLKYATTRSIAKYPVGIEVGPQPQGVLRADILDQMRKMIQHALDFIHNFNEGKEFPPCAIEVYKIMRKVDYPRNESGEISAIIHPKLQDQDWKPLHPEDPVFLTLDGKTIPLGGDQTVYPVFVNEAAYYEKKEAFAKTTKLTLNANSIRSSLH.

Positions 21 and 24 each coordinate Zn(2+). N-acetyl-L-aspartate-binding residues include Arg63, Asn70, and Arg71. A Zn(2+)-binding site is contributed by His116. Residues Tyr164 and Arg168 each contribute to the N-acetyl-L-aspartate site. Glu178 functions as the Proton donor/acceptor in the catalytic mechanism. Tyr288 is a binding site for N-acetyl-L-aspartate.

Belongs to the AspA/AstE family. Aspartoacylase subfamily. As to quaternary structure, homodimer. The cofactor is Zn(2+).

The protein localises to the cytoplasm. The protein resides in the nucleus. It carries out the reaction an N-acyl-L-aspartate + H2O = a carboxylate + L-aspartate. The enzyme catalyses N-acetyl-L-aspartate + H2O = L-aspartate + acetate. Its function is as follows. Catalyzes the deacetylation of N-acetylaspartic acid (NAA) to produce acetate and L-aspartate. NAA occurs in high concentration in brain and its hydrolysis NAA plays a significant part in the maintenance of intact white matter. In other tissues it acts as a scavenger of NAA from body fluids. The sequence is that of Aspartoacylase (ASPA) from Bos taurus (Bovine).